A 211-amino-acid chain; its full sequence is Small ribosomal subunit protein uS3 (211 aa).

The KH type-2 domain maps to 38-106 (LRKFIKKAFY…NIELNIIEVK (69 aa)).

This sequence belongs to the universal ribosomal protein uS3 family. Part of the 30S ribosomal subunit. Forms a tight complex with proteins S10 and S14.

Binds the lower part of the 30S subunit head. Binds mRNA in the 70S ribosome, positioning it for translation. In Ehrlichia canis (strain Jake), this protein is Small ribosomal subunit protein uS3.